A 226-amino-acid chain; its full sequence is Membrane protein (226 aa).

Residues 1-11 (MSNGSIPVDEV) are Virion surface-facing. A helical transmembrane segment spans residues 12–32 (IEHLRNWNFTWNIILTILLVV). Topologically, residues 33 to 41 (LQYGHYKYS) are intravirion. The helical transmembrane segment at 42–62 (VFLYGVKMAILWILWPLVLAL) threads the bilayer. Residues 63 to 75 (SLFDAWASFQVNW) are Virion surface-facing. A helical membrane pass occupies residues 76–96 (VFFAFSILMACITLMLWIMYF). Over 97 to 226 (VNSIRLWRRT…TDSEKVPHLV (130 aa)) the chain is Intravirion. The interaction with N protein stretch occupies residues 200-216 (RSKHGDYSAVSNPSAVL).

It belongs to the alphacoronaviruses M protein family. Homomultimer. Interacts with envelope E protein in the budding compartment of the host cell, which is located between endoplasmic reticulum and the Golgi complex. Forms a complex with HE and S proteins. Interacts with nucleocapsid N protein. This interaction probably participates in RNA packaging into the virus.

Its subcellular location is the virion membrane. It localises to the host Golgi apparatus membrane. Component of the viral envelope that plays a central role in virus morphogenesis and assembly via its interactions with other viral proteins. The protein is Membrane protein of Sus scrofa (Pig).